Reading from the N-terminus, the 427-residue chain is Histidine--tRNA ligase (427 aa).

This sequence belongs to the class-II aminoacyl-tRNA synthetase family. Homodimer.

It localises to the cytoplasm. It carries out the reaction tRNA(His) + L-histidine + ATP = L-histidyl-tRNA(His) + AMP + diphosphate + H(+). The protein is Histidine--tRNA ligase of Aster yellows witches'-broom phytoplasma (strain AYWB).